The sequence spans 522 residues: GMP synthase [glutamine-hydrolyzing] (522 aa).

A Glutamine amidotransferase type-1 domain is found at 9–204; that stretch reads KILILDFGAQ…VVDICGCQML (196 aa). The active-site Nucleophile is cysteine 86. Catalysis depends on residues histidine 178 and glutamate 180. The GMPS ATP-PPase domain maps to 205 to 397; the sequence is WTAANIIEDQ…LGLPHAMVYR (193 aa). Residue 232-238 coordinates ATP; it reads SGGVDSS.

Homodimer.

The catalysed reaction is XMP + L-glutamine + ATP + H2O = GMP + L-glutamate + AMP + diphosphate + 2 H(+). It functions in the pathway purine metabolism; GMP biosynthesis; GMP from XMP (L-Gln route): step 1/1. In terms of biological role, catalyzes the synthesis of GMP from XMP. This chain is GMP synthase [glutamine-hydrolyzing] (guaA), found in Xylella fastidiosa (strain 9a5c).